Here is a 128-residue protein sequence, read N- to C-terminus: Large ribosomal subunit protein bL17 (128 aa).

Belongs to the bacterial ribosomal protein bL17 family. In terms of assembly, part of the 50S ribosomal subunit. Contacts protein L32.

The sequence is that of Large ribosomal subunit protein bL17 from Streptococcus thermophilus (strain ATCC BAA-250 / LMG 18311).